Consider the following 82-residue polypeptide: U1-theraphotoxin-Ct1b (82 aa).

The first 23 residues, 1 to 23, serve as a signal peptide directing secretion; it reads MRTFTLIAILTCALLVIYHAAEA. Residues 24–44 constitute a propeptide that is removed on maturation; that stretch reads EELEAKDVIESKALATLDEER.

This sequence belongs to the neurotoxin 12 (Hwtx-2) family. 03 (juruin) subfamily. Post-translationally, contains 3 disulfide bonds. Two different connectivities are observed in similar proteins (C1-C3, C2-C5, C4-C6 or C1-C4, C2-C5, C3-C6). As to expression, expressed by the venom gland.

It localises to the secreted. Functionally, this toxin causes paralysis and death to sheep blowflies. It does not target insect sodium channels. This Coremiocnemis tropix (Australian tarantula spider) protein is U1-theraphotoxin-Ct1b.